Here is a 600-residue protein sequence, read N- to C-terminus: Elongation factor 4 (600 aa).

The 183-residue stretch at 5 to 187 folds into the tr-type G domain; it reads KYIRNFSIVA…EIVEKVPAPE (183 aa). Residues 17-22 and 134-137 each bind GTP; these read DHGKST and NKVD.

This sequence belongs to the TRAFAC class translation factor GTPase superfamily. Classic translation factor GTPase family. LepA subfamily.

It localises to the cell membrane. It catalyses the reaction GTP + H2O = GDP + phosphate + H(+). Functionally, required for accurate and efficient protein synthesis under certain stress conditions. May act as a fidelity factor of the translation reaction, by catalyzing a one-codon backward translocation of tRNAs on improperly translocated ribosomes. Back-translocation proceeds from a post-translocation (POST) complex to a pre-translocation (PRE) complex, thus giving elongation factor G a second chance to translocate the tRNAs correctly. Binds to ribosomes in a GTP-dependent manner. This Clostridium perfringens (strain ATCC 13124 / DSM 756 / JCM 1290 / NCIMB 6125 / NCTC 8237 / Type A) protein is Elongation factor 4.